A 469-amino-acid polypeptide reads, in one-letter code: Serine/threonine-protein kinase orb6 (469 aa).

The Protein kinase domain maps to 93 to 392 (FSTIKVIGKG…AIEIMQHPFF (300 aa)). ATP-binding positions include 99–107 (IGKGAFGEV) and Lys122. Asp216 serves as the catalytic Proton acceptor. The AGC-kinase C-terminal domain maps to 393-467 (TGIDWDHIRE…KKFNYLTMKG (75 aa)).

The protein belongs to the protein kinase superfamily. Ser/Thr protein kinase family. Interacts with mob2.

It catalyses the reaction L-seryl-[protein] + ATP = O-phospho-L-seryl-[protein] + ADP + H(+). It carries out the reaction L-threonyl-[protein] + ATP = O-phospho-L-threonyl-[protein] + ADP + H(+). Functionally, interacts with pak1/shk1 and coordinates cell morphogenesis with the cell cycle. It is essential for maintenance of cell polarity and is involved in mitotic control. The polypeptide is Serine/threonine-protein kinase orb6 (orb6) (Schizosaccharomyces pombe (strain 972 / ATCC 24843) (Fission yeast)).